The primary structure comprises 154 residues: Histone H2B.v3 (154 aa).

Residues 1 to 11 (MVFVKGQKKAT) are compositionally biased toward basic residues. Residues 1–48 (MVFVKGQKKATKGSTQSGEEKTASTTPKVTKTPTEGGEKKRKKRKSDY) are disordered. Residues 12-27 (KGSTQSGEEKTASTTP) are compositionally biased toward polar residues.

The protein belongs to the histone H2B family. As to quaternary structure, the nucleosome is a histone octamer containing two molecules each of H2A, H2B, H3 and H4 assembled in one H3-H4 heterotetramer and two H2A-H2B heterodimers. The octamer wraps approximately 147 bp of DNA.

It localises to the nucleus. Its subcellular location is the chromosome. Functionally, core component of nucleosome which plays a central role in DNA double strand break (DSB) repair. Nucleosomes wrap and compact DNA into chromatin, limiting DNA accessibility to the cellular machineries which require DNA as a template. Histones thereby play a central role in transcription regulation, DNA repair, DNA replication and chromosomal stability. DNA accessibility is regulated via a complex set of post-translational modifications of histones, also called histone code, and nucleosome remodeling. In Dictyostelium discoideum (Social amoeba), this protein is Histone H2B.v3 (H2Bv3).